Consider the following 708-residue polypeptide: MFEKPVVKTFQYGNHTVTLETGVIARQATAAVMVTMDDTAVFVSVVGKKEAVPGQDFFPLTVNYQERTYAAGKIPGGFFKREGRPSEGETLTARLIDRPIRPLFPEGFNNEVQVIATVVSVNPDVQPDIPTMIGTSAALAISGIPFNGPIGAARVGHIDGQLVLNPSNTELNASRLDLVVAGTESAVLMVESEADNLTEEEMLSAVVFGHDQQQAVIKAINEFAAEVATPSWNWVAPEANTALNEKVADLAEAKLVEAYKITEKMARYDRIHEIAAEVNAVILAEDPEADAKEIHTIFHDLEKTVVRRSIIAGNPRIDGREKDMVRALDVRTGVLPRTHGSSLFTRGETQALVTATLGTQRDAQIIDELTGEKKDYFLLHYNFPPYCVGETGFVGSPKRREIGHGKLAKRGIAAVMPSIDEFPYTVRVVSEITESNGSSSMASVCGTSLALMDAGVPIKASVAGIAMGLVKEGDDFVVLSDILGDEDHLGDMDFKVAGTSTGITALQMDIKIEGITKEIMQIALNQAQGARKHILSVMDQAISGARDDISEFAPRIHTMKISADKIKDVIGKGGAVIRALTEETGTTIEIEDDGTIKIAATEGAAAKEAIRRIQEITAEVEVGVIYTGKVARLADFGAFVTILPGKDGLVHISQIADKRVEKVSDYLTEGQEVQVKVLEIDRQGRVRLSMKEAVEKPVEAEAPAAEEE.

2 residues coordinate Mg(2+): Asp-487 and Asp-493. The KH domain maps to 554 to 613 (PRIHTMKISADKIKDVIGKGGAVIRALTEETGTTIEIEDDGTIKIAATEGAAAKEAIRRI). The 69-residue stretch at 623–691 (GVIYTGKVAR…RQGRVRLSMK (69 aa)) folds into the S1 motif domain.

The protein belongs to the polyribonucleotide nucleotidyltransferase family. As to quaternary structure, component of the RNA degradosome, which is a multiprotein complex involved in RNA processing and mRNA degradation. It depends on Mg(2+) as a cofactor.

The protein localises to the cytoplasm. It carries out the reaction RNA(n+1) + phosphate = RNA(n) + a ribonucleoside 5'-diphosphate. Its function is as follows. Involved in mRNA degradation. Catalyzes the phosphorolysis of single-stranded polyribonucleotides processively in the 3'- to 5'-direction. This Vibrio vulnificus (strain CMCP6) protein is Polyribonucleotide nucleotidyltransferase.